The primary structure comprises 318 residues: 2-dehydro-3-deoxygalactonokinase (318 aa).

Residues 35-39 (GAESN), tyrosine 90, 105-107 (YDR), and arginine 169 contribute to the substrate site. Residues 167-169 (NYR), 228-233 (TRGEDG), and 257-260 (GTGD) contribute to the ATP site. The substrate site is built by aspartate 260 and aspartate 296. Aspartate 260 serves as the catalytic Proton acceptor.

The protein belongs to the carbohydrate kinase PfkB family. As to quaternary structure, homohexamer.

It carries out the reaction 2-dehydro-3-deoxy-D-galactonate + ATP = 2-dehydro-3-deoxy-6-phospho-D-galactonate + ADP + H(+). In terms of biological role, involved in galactose catabolism. Catalyzes the phosphorylation of 2-keto-3-deoxygalactonate (KDGal) to produce 2-keto-3-deoxy-6-phosphogalactonate (KDPGal). Can also phosphorylate 2-keto-3-deoxygluconate (KDG) to 2-keto-3-deoxy-6-phosphogluconate (KDPG), but the catalytic efficiency for KDGal is 50-fold higher than for KDG. This Haloferax volcanii (strain ATCC 29605 / DSM 3757 / JCM 8879 / NBRC 14742 / NCIMB 2012 / VKM B-1768 / DS2) (Halobacterium volcanii) protein is 2-dehydro-3-deoxygalactonokinase.